A 445-amino-acid polypeptide reads, in one-letter code: Argininosuccinate synthase (445 aa).

ATP-binding positions include Ala-17 to Ser-25 and Ala-43. Tyr-99 is an L-citrulline binding site. Gly-129 and Thr-131 together coordinate ATP. L-aspartate-binding residues include Thr-131, Asn-135, and Asp-136. Asn-135 contacts L-citrulline. Residue Asp-136 coordinates ATP. Arg-139 and Ser-192 together coordinate L-citrulline. Residue Asp-194 coordinates ATP. Positions 201, 203, and 280 each coordinate L-citrulline.

This sequence belongs to the argininosuccinate synthase family. Type 2 subfamily. In terms of assembly, homotetramer.

Its subcellular location is the cytoplasm. The enzyme catalyses L-citrulline + L-aspartate + ATP = 2-(N(omega)-L-arginino)succinate + AMP + diphosphate + H(+). The protein operates within amino-acid biosynthesis; L-arginine biosynthesis; L-arginine from L-ornithine and carbamoyl phosphate: step 2/3. The chain is Argininosuccinate synthase from Burkholderia cenocepacia (strain ATCC BAA-245 / DSM 16553 / LMG 16656 / NCTC 13227 / J2315 / CF5610) (Burkholderia cepacia (strain J2315)).